The sequence spans 672 residues: uncharacterized protein (672 aa).

The first 24 residues, 1-24, serve as a signal peptide directing secretion; that stretch reads MKTLKTLKIFIIICIASVSLASFA. 6 helical membrane-spanning segments follow: residues 226–246, 254–274, 410–430, 436–456, 469–489, and 562–582; these read IIGA…ALNK, IALF…LGPL, IILA…LYFI, CMIT…MALF, VCIS…LLIT, and VVSI…FYYF. The tract at residues 626–672 is disordered; sequence ASQGKPSVGDKPDVGGKRKEGEQQGGDSESGAGGGLADLASGSGGGK. The segment covering 633–647 has biased composition (basic and acidic residues); sequence VGDKPDVGGKRKEGE. Positions 656–672 are enriched in gly residues; that stretch reads GAGGGLADLASGSGGGK.

Belongs to the TrbL/VirB6 family.

Its subcellular location is the cell membrane. This is an uncharacterized protein from Rickettsia felis (strain ATCC VR-1525 / URRWXCal2) (Rickettsia azadi).